Consider the following 313-residue polypeptide: Dehydrodolichyl diphosphate synthase CPT5, chloroplastic (313 aa).

The transit peptide at 1 to 42 (MAFSFQLQQVFPFPVKFCSQPKSIKLQIFPNLTKRLPIHPLA) directs the protein to the chloroplast. The active site involves Asp89.

The protein belongs to the UPP synthase family. The cofactor is Mg(2+). As to expression, expressed in leaf trichomes, stem trichomes and old leaves. Expressed at low levels in young leaves and flowers.

It localises to the plastid. The protein resides in the chloroplast. The catalysed reaction is n isopentenyl diphosphate + (2E,6E)-farnesyl diphosphate = a di-trans,poly-cis-polyprenyl diphosphate + n diphosphate. In terms of biological role, catalyzes cis-prenyl chain elongation to produce the polyprenyl backbone of dolichol, a glycosyl carrier-lipid required for the biosynthesis of several classes of glycoprotein. This chain is Dehydrodolichyl diphosphate synthase CPT5, chloroplastic, found in Solanum lycopersicum (Tomato).